The sequence spans 299 residues: KATNB1-like protein 1 (299 aa).

The Nuclear localization signal signature appears at 8-15; sequence VKKRNFSN. Serine 56 bears the Phosphoserine mark.

As to quaternary structure, interacts with KATNA1 and KATNAL1; these interactions are competed by KATNB1 which has a higher affinity for them.

It localises to the nucleus. Its subcellular location is the cytoplasm. The protein localises to the cytoskeleton. The protein resides in the spindle pole. Its function is as follows. Regulates microtubule-severing activity of KATNAL1 in a concentration-dependent manner in vitro. The sequence is that of KATNB1-like protein 1 (Katnbl1) from Mus musculus (Mouse).